A 251-amino-acid chain; its full sequence is Protein FAM216A (251 aa).

Positions 1–16 are enriched in polar residues; that stretch reads MPNQGPVSDWTECSSS. A disordered region spans residues 1–49; sequence MPNQGPVSDWTECSSSAEPPAVARAEGGGGGSAGHSYYQNSKDRIKDGH.

Belongs to the FAM216 family.

In Bos taurus (Bovine), this protein is Protein FAM216A (FAM216A).